The sequence spans 182 residues: Dirigent protein 1 (182 aa).

The N-terminal stretch at 1–24 (MAKRFLLLLPLLSSILLLAVSVTA) is a signal peptide. An N-linked (GlcNAc...) asparagine glycan is attached at asparagine 125.

This sequence belongs to the plant dirigent protein family. In terms of assembly, homodimer.

The protein resides in the secreted. It is found in the extracellular space. It localises to the apoplast. Its function is as follows. Dirigent proteins impart stereoselectivity on the phenoxy radical-coupling reaction, yielding optically active lignans from two molecules of coniferyl alcohol in the biosynthesis of lignans, flavonolignans, and alkaloids and thus plays a central role in plant secondary metabolism. The polypeptide is Dirigent protein 1 (DIR1) (Arabidopsis thaliana (Mouse-ear cress)).